The chain runs to 275 residues: Pyridoxal phosphate homeostasis protein (275 aa).

A Phosphoserine modification is found at S6. K47 carries the post-translational modification N6-(pyridoxal phosphate)lysine. Y69 is modified (phosphotyrosine). K125 bears the N6-succinyllysine mark. S226 and S244 each carry phosphoserine.

It belongs to the pyridoxal phosphate-binding protein YggS/PROSC family.

In terms of biological role, pyridoxal 5'-phosphate (PLP)-binding protein, which may be involved in intracellular homeostatic regulation of pyridoxal 5'-phosphate (PLP), the active form of vitamin B6. The sequence is that of Pyridoxal phosphate homeostasis protein from Pongo abelii (Sumatran orangutan).